A 425-amino-acid chain; its full sequence is Dipeptidase tcpJ (425 aa).

Residues His46, Asp48, and Glu158 each contribute to the Zn(2+) site. Residues His185, Arg259, and Asp318 each coordinate substrate.

The protein belongs to the metallo-dependent hydrolases superfamily. Peptidase M19 family. Zn(2+) is required as a cofactor.

The catalysed reaction is an L-aminoacyl-L-amino acid + H2O = 2 an L-alpha-amino acid. Dipeptidase; part of the gene cluster that mediates the biosynthesis of an unusual class of epipolythiodioxopiperazines (ETPs) lacking the reactive thiol group important for toxicity. Firstly, L-tyrosine is prenylated by tcpD, before undergoing condensation with L-glycine in a reaction catalyzed by the NRPS tcpP leading to the diketopiperazine (DKP) backbone. Afterwards the alpha-carbon of tyrosine is oxidized by the cytochrome P450 tcpC to form a hydroxyl group. However, in contrast other ETP biosynthesis pathways studied so far, tcpC is not able to bishydroxylate the DKP at both alpha-carbon positions, but hydroxylates the alpha-carbon of the tyrosine part and the nitrogen of the glycine part. The next steps involve an alpha,beta-elimination reaction catalyzed by tcpI, a methylation by the methyltransferase tcpN the action of the four enzyme cascade tcpG/K/J/I. Due to a dysfunctional cytochrome P450 monooxygenase tcpC, the pathway leads to the biosynthesis of probable non-toxic metabolites lacking the reactive thiol group. The chain is Dipeptidase tcpJ from Claviceps purpurea (strain 20.1) (Ergot fungus).